Reading from the N-terminus, the 65-residue chain is Large ribosomal subunit protein bL32 (65 aa).

The span at 1-18 shows a compositional bias: basic residues; the sequence is MAVPKRRHSKSRTRKRRS. The interval 1 to 20 is disordered; it reads MAVPKRRHSKSRTRKRRSTY.

It belongs to the bacterial ribosomal protein bL32 family.

The chain is Large ribosomal subunit protein bL32 from Salinibacter ruber (strain DSM 13855 / M31).